A 336-amino-acid chain; its full sequence is Probable G-protein coupled receptor 82 (336 aa).

The Extracellular segment spans residues 1–11; sequence MNNNTTCIQPS. 2 N-linked (GlcNAc...) asparagine glycosylation sites follow: Asn3 and Asn4. Residues 12 to 32 form a helical membrane-spanning segment; the sequence is MISSMALPIIYILLCIVGVFG. Residues 33–55 lie on the Cytoplasmic side of the membrane; it reads NTLSQWIFLTKIGKKTSTHIYLS. A helical transmembrane segment spans residues 56–76; sequence HLVTANLLVCSAMPFMSIYFL. Topologically, residues 77-92 are extracellular; that stretch reads KGFQWEYQSAQCRVVN. Residues 93 to 115 form a helical membrane-spanning segment; the sequence is FLGTLSMHASMFVSLLILSWIAI. Residues 116 to 156 are Cytoplasmic-facing; that stretch reads SRYATLMQKDSSQETTSCYEKIFYGHLLKKFRQPNFARKLC. Residues 157–177 traverse the membrane as a helical segment; it reads IYIWGVVLGIIIPVTVYYSVI. Over 178–197 the chain is Extracellular; that stretch reads EATEGEESLCYNRQMELGAM. A helical transmembrane segment spans residues 198–218; the sequence is ISQIAGLIGTTFIGFSFLVVL. The Cytoplasmic segment spans residues 219-251; the sequence is TSYYSFVSHLRKIRTCTSIMEKDLTYSSVKRHL. The helical transmembrane segment at 252–272 threads the bilayer; the sequence is LVIQILLIVCFLPYSIFKPIF. Residues 273 to 336 lie on the Extracellular side of the membrane; the sequence is YVLHQRDNCQ…SNSAHMQSYG (64 aa).

It belongs to the G-protein coupled receptor 1 family.

Its subcellular location is the cell membrane. Its function is as follows. Orphan receptor. This Homo sapiens (Human) protein is Probable G-protein coupled receptor 82 (GPR82).